The sequence spans 403 residues: Acetylornithine aminotransferase (403 aa).

Residues 107-108 (GA) and Phe-140 each bind pyridoxal 5'-phosphate. Residue Arg-143 participates in N(2)-acetyl-L-ornithine binding. 225-228 (DEVQ) provides a ligand contact to pyridoxal 5'-phosphate. Lys-254 carries the N6-(pyridoxal phosphate)lysine modification. N(2)-acetyl-L-ornithine is bound at residue Ser-282. Thr-283 lines the pyridoxal 5'-phosphate pocket.

The protein belongs to the class-III pyridoxal-phosphate-dependent aminotransferase family. ArgD subfamily. As to quaternary structure, homodimer. The cofactor is pyridoxal 5'-phosphate.

The protein resides in the cytoplasm. It carries out the reaction N(2)-acetyl-L-ornithine + 2-oxoglutarate = N-acetyl-L-glutamate 5-semialdehyde + L-glutamate. It participates in amino-acid biosynthesis; L-arginine biosynthesis; N(2)-acetyl-L-ornithine from L-glutamate: step 4/4. The polypeptide is Acetylornithine aminotransferase (Vibrio parahaemolyticus serotype O3:K6 (strain RIMD 2210633)).